A 932-amino-acid polypeptide reads, in one-letter code: Alanine--tRNA ligase (932 aa).

Zn(2+) contacts are provided by H623, H627, C726, and H730. The interval R893–D916 is disordered. Over residues V894–P910 the composition is skewed to gly residues.

The protein belongs to the class-II aminoacyl-tRNA synthetase family. The cofactor is Zn(2+).

Its subcellular location is the cytoplasm. It carries out the reaction tRNA(Ala) + L-alanine + ATP = L-alanyl-tRNA(Ala) + AMP + diphosphate. Catalyzes the attachment of alanine to tRNA(Ala) in a two-step reaction: alanine is first activated by ATP to form Ala-AMP and then transferred to the acceptor end of tRNA(Ala). Also edits incorrectly charged Ser-tRNA(Ala) and Gly-tRNA(Ala) via its editing domain. In Natronomonas pharaonis (strain ATCC 35678 / DSM 2160 / CIP 103997 / JCM 8858 / NBRC 14720 / NCIMB 2260 / Gabara) (Halobacterium pharaonis), this protein is Alanine--tRNA ligase.